We begin with the raw amino-acid sequence, 275 residues long: Large ribosomal subunit protein uL2c (275 aa).

The disordered stretch occupies residues 219–267 (TVRGSVMNPCDHPHGGGEGRTPIGRTRPLTPWGKPALGKKTRKTKKLSS). Residues 255 to 264 (LGKKTRKTKK) are compositionally biased toward basic residues.

Belongs to the universal ribosomal protein uL2 family. In terms of assembly, part of the 50S ribosomal subunit.

It is found in the plastid. The protein localises to the chloroplast. The protein is Large ribosomal subunit protein uL2c (rpl2) of Thalassiosira pseudonana (Marine diatom).